Consider the following 555-residue polypeptide: Dihydroxy-acid dehydratase (555 aa).

Residue aspartate 78 coordinates Mg(2+). Residue cysteine 119 participates in [2Fe-2S] cluster binding. Positions 120 and 121 each coordinate Mg(2+). At lysine 121 the chain carries N6-carboxylysine. Cysteine 191 provides a ligand contact to [2Fe-2S] cluster. Glutamate 444 contacts Mg(2+). Residue serine 470 is the Proton acceptor of the active site.

The protein belongs to the IlvD/Edd family. Homodimer. The cofactor is [2Fe-2S] cluster. Mg(2+) is required as a cofactor.

The enzyme catalyses (2R)-2,3-dihydroxy-3-methylbutanoate = 3-methyl-2-oxobutanoate + H2O. It carries out the reaction (2R,3R)-2,3-dihydroxy-3-methylpentanoate = (S)-3-methyl-2-oxopentanoate + H2O. It participates in amino-acid biosynthesis; L-isoleucine biosynthesis; L-isoleucine from 2-oxobutanoate: step 3/4. The protein operates within amino-acid biosynthesis; L-valine biosynthesis; L-valine from pyruvate: step 3/4. In terms of biological role, functions in the biosynthesis of branched-chain amino acids. Catalyzes the dehydration of (2R,3R)-2,3-dihydroxy-3-methylpentanoate (2,3-dihydroxy-3-methylvalerate) into 2-oxo-3-methylpentanoate (2-oxo-3-methylvalerate) and of (2R)-2,3-dihydroxy-3-methylbutanoate (2,3-dihydroxyisovalerate) into 2-oxo-3-methylbutanoate (2-oxoisovalerate), the penultimate precursor to L-isoleucine and L-valine, respectively. This Nitratidesulfovibrio vulgaris (strain DSM 19637 / Miyazaki F) (Desulfovibrio vulgaris) protein is Dihydroxy-acid dehydratase.